The primary structure comprises 94 residues: DNA-directed RNA polymerase subunit omega (94 aa).

It belongs to the RNA polymerase subunit omega family. In terms of assembly, the RNAP catalytic core consists of 2 alpha, 1 beta, 1 beta' and 1 omega subunit. When a sigma factor is associated with the core the holoenzyme is formed, which can initiate transcription.

The enzyme catalyses RNA(n) + a ribonucleoside 5'-triphosphate = RNA(n+1) + diphosphate. In terms of biological role, promotes RNA polymerase assembly. Latches the N- and C-terminal regions of the beta' subunit thereby facilitating its interaction with the beta and alpha subunits. The sequence is that of DNA-directed RNA polymerase subunit omega from Shewanella pealeana (strain ATCC 700345 / ANG-SQ1).